The following is a 246-amino-acid chain: tRNA (guanine-N(7)-)-methyltransferase (246 aa).

Positions 77, 102, 129, and 152 each coordinate S-adenosyl-L-methionine. The active site involves D152. Substrate is bound by residues K156, D188, and 225–228 (TKFE).

Belongs to the class I-like SAM-binding methyltransferase superfamily. TrmB family.

The enzyme catalyses guanosine(46) in tRNA + S-adenosyl-L-methionine = N(7)-methylguanosine(46) in tRNA + S-adenosyl-L-homocysteine. Its pathway is tRNA modification; N(7)-methylguanine-tRNA biosynthesis. In terms of biological role, catalyzes the formation of N(7)-methylguanine at position 46 (m7G46) in tRNA. This chain is tRNA (guanine-N(7)-)-methyltransferase, found in Haemophilus influenzae (strain ATCC 51907 / DSM 11121 / KW20 / Rd).